The primary structure comprises 373 residues: Putative aminopeptidase SgcX (373 aa).

Residues H67 and D180 each coordinate a divalent metal cation. E212 (proton acceptor) is an active-site residue. The a divalent metal cation site is built by E213, D235, and H329.

This sequence belongs to the peptidase M42 family. A divalent metal cation serves as cofactor.

The polypeptide is Putative aminopeptidase SgcX (sgcX) (Escherichia coli (strain K12)).